The sequence spans 390 residues: GTPase Obg (390 aa).

Residues 1 to 159 (MKFIDESLIR…RDLLLELMLL (159 aa)) enclose the Obg domain. The OBG-type G domain occupies 160-333 (ADVGMLGLPN…LCRDIMDFII (174 aa)). Residues 166-173 (GLPNAGKS), 191-195 (FTTLV), 213-216 (DIPG), 283-286 (NKID), and 314-316 (SAA) each bind GTP. Serine 173 and threonine 193 together coordinate Mg(2+). Residues 363–382 (EHQFDDDEDWDDDWSEEDDE) are disordered. The segment covering 366–382 (FDDDEDWDDDWSEEDDE) has biased composition (acidic residues).

This sequence belongs to the TRAFAC class OBG-HflX-like GTPase superfamily. OBG GTPase family. As to quaternary structure, monomer. Mg(2+) serves as cofactor.

Its subcellular location is the cytoplasm. Functionally, an essential GTPase which binds GTP, GDP and possibly (p)ppGpp with moderate affinity, with high nucleotide exchange rates and a fairly low GTP hydrolysis rate. Plays a role in control of the cell cycle, stress response, ribosome biogenesis and in those bacteria that undergo differentiation, in morphogenesis control. This Haemophilus influenzae (strain ATCC 51907 / DSM 11121 / KW20 / Rd) protein is GTPase Obg.